Reading from the N-terminus, the 818-residue chain is MAATEAAAADSAGPAPGVPATPASTRGAAAASSPWRPPESRLQGSRPRPARARAAAPVPPARELIQPTVSELSRAVRTNILCTVRGCGKILPNSPALNMHLVKSHRLQDGIVNPTIRKDLTTAPKFYCCPIKGCPRGPDRPFSQFSLVKQHFMKMHAEKKHKCSKCSNSYGTEWDLKRHEEDCGKTFQCTCGCPYASRTALQSHIYRTGHEIPAEHRDPPSKKRKMESYLQNQKLSSKTTEPLSDQAAPRQDAAEPDAPEVKPAASLEDSCSAHTKKQSVATPPRCPQKLLLPKPKVALVKLPVMQFSPVPVFVPTAESSAQPVVLGVDHSSAAGTVHLVPLSVGALILSLDSEACSLKESLPLSKIISPVVEPMNTGVQVNLGKSLCSPLQEVGSVCQRTSISSSNVQTDLTYASANLIPSAQWLGPDSSVSSCSQTDLSFDSQVSLPVSVHTQTLVPSSKVTSSIAAQTDAFIDACFQPGGVSRETQTSRMQNRTNDSVPVGHTGLCGDIFESVHASYSVPTDTIMSSSLVAETGTHGLPPQSDPKILGQVMEKSAPVLNFSTQNGLLPAHTMTDNQTQTIDLLSDLENILSSNLPGQTLDNRSLLSDTNPGPDAQLPAGSAQNSGIDFDIEEFLSASNIQTQTEESELSSMSTEPVLESLDIETQTDVLLSDPSTQPYGFRAGSGFLGLEMFDTQTQTDLNFFLDSSPHLPLGSILKHSSFSMSTDSSDTETQTEGACPARHLPALESKVQLSSTETQTMSSGFEPLGNLFLTSNETQTAMDDFLLADLAWNTMESQFSSVETQTCAELHAVSSF.

Residues 1 to 34 (MAATEAAAADSAGPAPGVPATPASTRGAAAASSP) are compositionally biased toward low complexity. The interval 1–62 (MAATEAAAAD…RAAAPVPPAR (62 aa)) is disordered. A C2H2-type 1 zinc finger spans residues 80–105 (ILCTVRGCGKILPNSPALNMHLVKSH). Residues 161–181 (HKCSKCSNSYGTEWDLKRHEE) form a C2H2-type 2; degenerate zinc finger. Positions 210–221 (HEIPAEHRDPPS) are enriched in basic and acidic residues. Disordered regions lie at residues 210–284 (HEIP…ATPP) and 603–625 (DNRS…GSAQ). The tract at residues 219-437 (PPSKKRKMES…PDSSVSSCSQ (219 aa)) is required for formation of RAD51 foci. Polar residues-rich tracts occupy residues 229–243 (YLQN…TEPL) and 603–612 (DNRSLLSDTN).

Interacts via its C-terminus with ATM. Interacts with DYNLL; this interaction inhibits ATMIN transcriptional activity and hence may play a role in a feedback loop whereby DYNLL1 inhibits transactivation of its own promoter by ATMIN. ATMIN.

It localises to the nucleus. Its function is as follows. Transcription factor. Plays a crucial role in cell survival and RAD51 foci formation in response to methylating DNA damage. Involved in regulating the activity of ATM in the absence of DNA damage. May play a role in stabilizing ATM. Binds to the DYNLL1 promoter and activates its transcription. This chain is ATM interactor, found in Mus musculus (Mouse).